A 453-amino-acid chain; its full sequence is tRNA-2-methylthio-N(6)-dimethylallyladenosine synthase (453 aa).

One can recognise an MTTase N-terminal domain in the interval 21 to 137 (RGVYISTYGC…LPQLVAKSFA (117 aa)). Residues Cys-30, Cys-66, Cys-100, Cys-174, Cys-178, and Cys-181 each contribute to the [4Fe-4S] cluster site. In terms of domain architecture, Radical SAM core spans 160–389 (RNPGVATYVN…FDVHEAMAFE (230 aa)). The 62-residue stretch at 392–453 (KRYEGTTMKV…FPAVFRGEMI (62 aa)) folds into the TRAM domain.

The protein belongs to the methylthiotransferase family. MiaB subfamily. As to quaternary structure, monomer. Requires [4Fe-4S] cluster as cofactor.

It localises to the cytoplasm. It catalyses the reaction N(6)-dimethylallyladenosine(37) in tRNA + (sulfur carrier)-SH + AH2 + 2 S-adenosyl-L-methionine = 2-methylsulfanyl-N(6)-dimethylallyladenosine(37) in tRNA + (sulfur carrier)-H + 5'-deoxyadenosine + L-methionine + A + S-adenosyl-L-homocysteine + 2 H(+). Catalyzes the methylthiolation of N6-(dimethylallyl)adenosine (i(6)A), leading to the formation of 2-methylthio-N6-(dimethylallyl)adenosine (ms(2)i(6)A) at position 37 in tRNAs that read codons beginning with uridine. This chain is tRNA-2-methylthio-N(6)-dimethylallyladenosine synthase, found in Bdellovibrio bacteriovorus (strain ATCC 15356 / DSM 50701 / NCIMB 9529 / HD100).